Reading from the N-terminus, the 271-residue chain is Orotidine 5'-phosphate decarboxylase (271 aa).

Lys-95 acts as the Proton donor in catalysis.

The protein belongs to the OMP decarboxylase family. Type 2 subfamily.

It catalyses the reaction orotidine 5'-phosphate + H(+) = UMP + CO2. The protein operates within pyrimidine metabolism; UMP biosynthesis via de novo pathway; UMP from orotate: step 2/2. The sequence is that of Orotidine 5'-phosphate decarboxylase from Ralstonia pickettii (strain 12J).